A 167-amino-acid chain; its full sequence is uncharacterized protein (167 aa).

This is an uncharacterized protein from Homo sapiens (Human).